Reading from the N-terminus, the 123-residue chain is MARISGVDLPRDKRVEVALTYIYGIGRSSAKQLLEQVNVNPETRVRDLTEEEISRLRDLIDKEYKVEGDLRREVSLNIKRLIEIGSYRGLRHRRGLPVWGQRTRTNARTRKGPKKTVGVRRKK.

Residues 103-123 (TRTNARTRKGPKKTVGVRRKK) are disordered. The segment covering 105–123 (TNARTRKGPKKTVGVRRKK) has biased composition (basic residues).

Belongs to the universal ribosomal protein uS13 family. Part of the 30S ribosomal subunit. Forms a loose heterodimer with protein S19. Forms two bridges to the 50S subunit in the 70S ribosome.

Its function is as follows. Located at the top of the head of the 30S subunit, it contacts several helices of the 16S rRNA. In the 70S ribosome it contacts the 23S rRNA (bridge B1a) and protein L5 of the 50S subunit (bridge B1b), connecting the 2 subunits; these bridges are implicated in subunit movement. Contacts the tRNAs in the A and P-sites. This Desulforudis audaxviator (strain MP104C) protein is Small ribosomal subunit protein uS13.